Here is a 1710-residue protein sequence, read N- to C-terminus: MASLSQSESGRLYSWWWDSHIPKNSKWIQDNLADMDSKVKTMIKLIEADADSFARRADMYFKKRPELMKLVEELYRAYRALAERYDHTTVELRRAHKVMVEAFPNQMSFDMIEDSASSSSEPRTEADTEALQKDGTKSKRSFSQMNKLDGTSDSHEADSEVETLKRTLLELQTEKEALNLQYQLILSKVSRFEKELNDAQKDVKGFDERACKADIEIKILKESLAKLEVERDTGLLQYSQAIERIADLEASISHGQEYAKGLTNRVSEAEREAMSLKKELSRLQSEKEAGLLRYNKSLELISSLEKTIRDAEESVRVFRDQSEQAETEIKALKQELLKLNEVNEDLNVRYQQCLETISKLEREVSHAQDNAKRLSSEVLAGAAKIKTVEEQCALLESFNQTMKVEAENLAHKMSAKDQELSQKQNEIEKLQAVMQEEQLRFSELGASLRNLESLHSQSQEEQKVLTSELHSRIQMLRELEMRNSKLEGDISSKEENRNLSEINDTSISLEIQKNEISCLKKMKEKLEEEVAKQMNQSSALQVEIHCVKGNIDSMNRRYQKLIDQVSLTGFDPESLSYSVKKLQDENSKLVELCTNQRDENNAVTGKLCEMDSILKRNADLEKLLLESNTKLDGSREKAKDLIERCESLRGEKSELAAERANLVSQLQIMTANMQTLLEKNSVLEKSLSCANIELESLRDKSKCFDDFFQFLKNDKSELMKERESLVSQLCKVEEKLGVLEKKYTELEVRYTDLQRDNKLKSHQVEELQVSLAAEKQESANYKRSTESRLADLQKNVSFLREECRSRKREYEDELDRVVNKQVEIFILQKLIEDLEQKNFSLLIECQKHVEASEFSEKLIAELESENLEQQMEAEIFLDEIDSLRGAIYQVIKALQVEADCKTEQKITKDQISVSRALGEIDSLKGSLSSAEYEMHRLVVENSVLLSLLGQFQSDGLVLESEKNILEKDLKTKIHQCGMLEKDKQDLQEANRLLKSKLIKREQQEQKLRAELKFENLKFESLHDSYMVLQQDYSYTLNDNKTLLLKFSEFKDGMHVVEEENDAILQEAVALSNTCVVYRSFGSEMAEEVEDFVETVSSLREISTGLKRKVETLEKKLEGKEKESQGLNKMLENLQEGLEEDNFLTGLLEHQVSNVDEILEHREMEILEAEHMLKATNNENEELHKEVEELRKDYEDSRRMRANLEWQISELSDVAGRQEEEIRKLNALNENLESEVQFLNKEIQRQQVREEYLSLELQEKSNEIGLWDSAATSFYFDLQVSAIRELILENKVNELSGVCENLNDEVVTKTTKIKQMKETVGFLESQVTELKSQLSAYDPVIASLAGDVKALEKSTHALTKFPATAYQQRVGNNLEESGSTTSPCNGIVILKEINPSIKTIEQAFVKEKGRLSRQITRSTSQKRRDRRKIENIQPDDQVTGESRQPRLRPEMTEVKNELLMKDNPRDQVTDSLTYGRSQGTSHGSNDMFEFWDESAESETSVNFLINSNKPQRSLNSNLRHQSRNPSIESDKAVGVVDKLELSRNIEDKAKILERLLSDSRRLSSLRISLTDLKRKLEMNEKQRRFSNADLVIVKRQLKEMEEAVSQLENTNEILSKEIEETGDARDIYRKVVVEKSRSGSEKIEQLQNKMQNIEQTVLKLEDGTKSKGRKMFSETRTVILLRDIIHKGGKRSARKKKNRFCGCIRSSTKEE.

The NAB domain maps to 13–92 (YSWWWDSHIP…ERYDHTTVEL (80 aa)). The segment at 113–159 (EDSASSSSEPRTEADTEALQKDGTKSKRSFSQMNKLDGTSDSHEADS) is disordered. Basic and acidic residues-rich tracts occupy residues 122–137 (PRTE…DGTK) and 150–159 (GTSDSHEADS). Coiled-coil stretches lie at residues 152–446 (SDSH…ELGA), 474–546 (QMLR…EIHC), 579–883 (VKKL…IDSL), 974–1021 (HQCG…FESL), 1095–1259 (VSSL…LQEK), and 1285–1336 (LILE…LSAY). Positions 1409-1448 (RLSRQITRSTSQKRRDRRKIENIQPDDQVTGESRQPRLRP) are disordered. A coiled-coil region spans residues 1559 to 1665 (RRLSSLRISL…VLKLEDGTKS (107 aa)).

It belongs to the NET family. In terms of tissue distribution, expressed in root meristems and at very low levels throughout mature vasculature.

Its function is as follows. Plant-specific actin binding protein. May be part of a membrane-cytoskeletal adapter complex. The sequence is that of Protein NETWORKED 1B from Arabidopsis thaliana (Mouse-ear cress).